Consider the following 108-residue polypeptide: Thiosulfate sulfurtransferase GlpE (108 aa).

Residues 17-105 enclose the Rhodanese domain; the sequence is QEKEAVLVDI…WQRQFPAEVA (89 aa). Cys65 serves as the catalytic Cysteine persulfide intermediate.

This sequence belongs to the GlpE family.

It is found in the cytoplasm. It carries out the reaction thiosulfate + hydrogen cyanide = thiocyanate + sulfite + 2 H(+). It catalyses the reaction thiosulfate + [thioredoxin]-dithiol = [thioredoxin]-disulfide + hydrogen sulfide + sulfite + 2 H(+). Transferase that catalyzes the transfer of sulfur from thiosulfate to thiophilic acceptors such as cyanide or dithiols. May function in a CysM-independent thiosulfate assimilation pathway by catalyzing the conversion of thiosulfate to sulfite, which can then be used for L-cysteine biosynthesis. The protein is Thiosulfate sulfurtransferase GlpE of Escherichia coli O45:K1 (strain S88 / ExPEC).